The sequence spans 462 residues: uncharacterized protein (462 aa).

2 helical membrane-spanning segments follow: residues 381-401 and 433-453; these read WILGSMILFTILASILRFKGM and LWILEPIIRVTSLILLGNLYI.

It is found in the cell membrane. This is an uncharacterized protein from Methanocaldococcus jannaschii (strain ATCC 43067 / DSM 2661 / JAL-1 / JCM 10045 / NBRC 100440) (Methanococcus jannaschii).